A 511-amino-acid polypeptide reads, in one-letter code: Endoglucanase B (511 aa).

The signal sequence occupies residues 1-29 (MNLLSGWVRPLMLGCGLLGAALSAGSIQA). A CBM2 domain is found at 30–130 (AVCEYRVTNE…AVTGAICGGQ (101 aa)). Cysteine 32 and cysteine 127 are joined by a disulfide. The interval 137 to 173 (SVASSSSSSSVVSSTPRSSSSSVSSSVPGTSSSSSSS) is disordered. The 30-residue stretch at 180 to 209 (ACNWYGTLTPLCNNTSNGWGYEDGRSCVAR) folds into the CBM10 domain. Cystine bridges form between cysteine 181-cysteine 212 and cysteine 191-cysteine 206. The active-site Nucleophile is the aspartate 276. Aspartate 393 serves as the catalytic Proton donor.

It belongs to the glycosyl hydrolase 45 (cellulase K) family.

It localises to the periplasm. It catalyses the reaction Endohydrolysis of (1-&gt;4)-beta-D-glucosidic linkages in cellulose, lichenin and cereal beta-D-glucans.. In terms of biological role, this enzyme catalyzes the endohydrolysis of 1,4-beta-glucosidic linkages in cellulose, lichenin and cereal beta-D-glucans. EGB is most active against barley beta-glucan, but showed significant activity against amorphous and crystalline cellulose. This chain is Endoglucanase B (celB), found in Cellvibrio japonicus (strain Ueda107) (Pseudomonas fluorescens subsp. cellulosa).